Reading from the N-terminus, the 145-residue chain is Methyl-coenzyme M reductase I operon protein D (145 aa).

As to quaternary structure, MCR is composed of three subunits: alpha, beta, and gamma. The function of proteins C and D is not known.

The chain is Methyl-coenzyme M reductase I operon protein D (mcrD) from Methanothermobacter thermautotrophicus (strain ATCC 29096 / DSM 1053 / JCM 10044 / NBRC 100330 / Delta H) (Methanobacterium thermoautotrophicum).